A 357-amino-acid chain; its full sequence is Protein MGF 360-22R (357 aa).

An ANK repeat occupies 66–98 (DLNLALMKAVQENNYELIMLFTEWGADINLGLI).

It belongs to the asfivirus MGF 360 family.

Plays a role in virus cell tropism, and may be required for efficient virus replication in macrophages. The chain is Protein MGF 360-22R from African swine fever virus (isolate Tick/Malawi/Lil 20-1/1983) (ASFV).